The following is a 122-amino-acid chain: Large ribosomal subunit protein bL12 (122 aa).

Positions 96–122 are disordered; sequence APKSLKTGLSKDEANEMKKKLEDAGAT. The span at 104 to 122 shows a compositional bias: basic and acidic residues; that stretch reads LSKDEANEMKKKLEDAGAT.

This sequence belongs to the bacterial ribosomal protein bL12 family. In terms of assembly, homodimer. Part of the ribosomal stalk of the 50S ribosomal subunit. Forms a multimeric L10(L12)X complex, where L10 forms an elongated spine to which 2 to 4 L12 dimers bind in a sequential fashion. Binds GTP-bound translation factors.

In terms of biological role, forms part of the ribosomal stalk which helps the ribosome interact with GTP-bound translation factors. Is thus essential for accurate translation. The sequence is that of Large ribosomal subunit protein bL12 from Liberibacter asiaticus (Citrus greening disease).